A 247-amino-acid chain; its full sequence is 2,3-bisphosphoglycerate-dependent phosphoglycerate mutase (247 aa).

Residues 8-15 (RHGESVWN), 21-22 (TG), Arg60, 87-90 (ERHY), Lys98, 114-115 (RR), and 183-184 (GN) contribute to the substrate site. His9 functions as the Tele-phosphohistidine intermediate in the catalytic mechanism. Residue Glu87 is the Proton donor/acceptor of the active site.

It belongs to the phosphoglycerate mutase family. BPG-dependent PGAM subfamily.

It carries out the reaction (2R)-2-phosphoglycerate = (2R)-3-phosphoglycerate. It participates in carbohydrate degradation; glycolysis; pyruvate from D-glyceraldehyde 3-phosphate: step 3/5. Catalyzes the interconversion of 2-phosphoglycerate and 3-phosphoglycerate. The sequence is that of 2,3-bisphosphoglycerate-dependent phosphoglycerate mutase from Thermobifida fusca (strain YX).